The chain runs to 305 residues: UDP-3-O-acyl-N-acetylglucosamine deacetylase (305 aa).

Histidine 78, histidine 237, and aspartate 241 together coordinate Zn(2+). Catalysis depends on histidine 264, which acts as the Proton donor.

This sequence belongs to the LpxC family. It depends on Zn(2+) as a cofactor.

It catalyses the reaction a UDP-3-O-[(3R)-3-hydroxyacyl]-N-acetyl-alpha-D-glucosamine + H2O = a UDP-3-O-[(3R)-3-hydroxyacyl]-alpha-D-glucosamine + acetate. It participates in glycolipid biosynthesis; lipid IV(A) biosynthesis; lipid IV(A) from (3R)-3-hydroxytetradecanoyl-[acyl-carrier-protein] and UDP-N-acetyl-alpha-D-glucosamine: step 2/6. In terms of biological role, catalyzes the hydrolysis of UDP-3-O-myristoyl-N-acetylglucosamine to form UDP-3-O-myristoylglucosamine and acetate, the committed step in lipid A biosynthesis. The chain is UDP-3-O-acyl-N-acetylglucosamine deacetylase from Burkholderia cenocepacia (strain ATCC BAA-245 / DSM 16553 / LMG 16656 / NCTC 13227 / J2315 / CF5610) (Burkholderia cepacia (strain J2315)).